A 376-amino-acid chain; its full sequence is Glucose-1-phosphate adenylyltransferase (376 aa).

Residues Y101, G166, 181 to 182 (EK), and S192 each bind alpha-D-glucose 1-phosphate.

The protein belongs to the bacterial/plant glucose-1-phosphate adenylyltransferase family. As to quaternary structure, homotetramer.

The enzyme catalyses alpha-D-glucose 1-phosphate + ATP + H(+) = ADP-alpha-D-glucose + diphosphate. It participates in glycan biosynthesis; glycogen biosynthesis. Its function is as follows. Involved in the biosynthesis of ADP-glucose, a building block required for the elongation reactions to produce glycogen. Catalyzes the reaction between ATP and alpha-D-glucose 1-phosphate (G1P) to produce pyrophosphate and ADP-Glc. The sequence is that of Glucose-1-phosphate adenylyltransferase from Bacillus cytotoxicus (strain DSM 22905 / CIP 110041 / 391-98 / NVH 391-98).